Reading from the N-terminus, the 1241-residue chain is MGRSSSKKKKKRGGSGRRGQLKDHGSNADEDNELLSEEITALSAIFQEDCKVVSDSRSPPQIAIKLRPYSKDMGYEDTDISAMLIVRCLPGYPYKCPKLQITPEQGLTTADAEKLLSLLEDQANSNAREGRVMIFNLVEAAQEFLSEIIPESHDEESVPCLTAHRSTQFIEQPMLSNIAKSCSGGPFVYGFIDLFSGLEDARNWSLTPDENRGIVSSVQSHPLDTSRILHQKPDKNLKRFEDHAKEEVALPAPIAKLNTVQEENVDDTSISSFDSSKSTDDVESGLFQNEKKESNLQDDTAEDDSTNSESESLGSWSSDSLAQDQVPQISKKDLLMVHLLRVACTSRGPLADALPQITDELHELGILSEEVLDLASKSSPDFNRTFEHAFNQNMASTSVPQFWEPPSDSCEPNASLPSSRYLNDFEELKPLGQGGFGHVVLCKNKLDGRQYAVKKIRLKDKEIPVNSRIVREVATLSRLQHQHVVRYYQAWFETGVVDPFAGANWGSKTAGSSMFSYSGAVSTEIPEQDNNLESTYLYIQMEYCPRTLRQVFESYNHFDKDFAWHLIRQIVEGLAHIHGQGIIHRDFTPNNIFFDARNDIKIGDFGLAKFLKLEQLDQDGGFSTDVAGSGVDSTGQAGTYFYTAPEIEQDWPKIDEKADMYSLGVVFFELWHPFGTAMERHVILTNLKLKGELPLKWVNEFPEQASLLRRLMSPSPSDRPSATELLKHAFPPRMESELLDNILRIMQTSEDSSVYDRVVSVIFDEEVLEMKSHQSSRSRLCADDSYIQYTEINTELRDYVVEITKEVFRQHCAKHLEVIPMRLLSDCPQFSRKTVKLLTNGGDMLELCYELRLPFVHWISVNQKSSFKRYEISHVYRRAIGHSPPNPCLQADFDIVGGTLSLTEAEVLKVIVDITTHIFHRGSCDIHLNHGDLLDAIWSWAGIKAEHRRKVAELLSMMGSLRPQSSERKLKWVFIRRQLLQELKLPEAVVNRLQTVASRFCGDADQALPRLRGALRADRPTRKALDELSNLLTYLRVWRIEEHVHIDVLMPPTESYHRNLFFQVFLTKENSSGTSNDGVLLAVGGRYDWLVQEVCDREHKMNLPGAVGVSLALETIFQHLPMDLRPIRNEVSTSVLVCSRGGGGLLVQRMELVAELWEKSIKAEFVPTPDPSLTEQYEYANEHEIKCLVIITESGVAQNQIEFVKVRHLELKKEKVVGREELVKFLLDAMAVQFRNPSVWS.

Basic residues predominate over residues 1-15 (MGRSSSKKKKKRGGS). Residues 1–33 (MGRSSSKKKKKRGGSGRRGQLKDHGSNADEDNE) are disordered. Residues 37-148 (EEITALSAIF…EAAQEFLSEI (112 aa)) form the RWD domain. The interval 253–321 (PIAKLNTVQE…SLGSWSSDSL (69 aa)) is disordered. 2 stretches are compositionally biased toward low complexity: residues 267–276 (DTSISSFDSS) and 307–321 (NSESESLGSWSSDSL). The Protein kinase domain maps to 425-731 (FEELKPLGQG…ATELLKHAFP (307 aa)). Residues 431–439 (LGQGGFGHV) and lysine 454 each bind ATP. The active-site Proton acceptor is the aspartate 586. The tract at residues 819–1219 (IPMRLLSDCP…ELKKEKVVGR (401 aa)) is histidyl-tRNA synthetase-like.

It belongs to the protein kinase superfamily. Ser/Thr protein kinase family. GCN2 subfamily. Homodimer; homodimerization is important for kinase activation by uncharged tRNAs. In terms of tissue distribution, expressed in roots, leaves, stems, buds, flowers, siliques and seedlings.

Its subcellular location is the cytoplasm. It catalyses the reaction L-seryl-[protein] + ATP = O-phospho-L-seryl-[protein] + ADP + H(+). It carries out the reaction L-threonyl-[protein] + ATP = O-phospho-L-threonyl-[protein] + ADP + H(+). The kinase activity is stimulated upon binding to uncharged tRNAs. Metabolic-stress sensing protein kinase that phosphorylates the alpha subunit of eukaryotic translation initiation factor 2 eIF-2-alpha in response to low amino acid availability. Plays a role as an activator of the general amino acid control pathway required for adapatation to amino acid starvation. Converts phosphorylated eIF-2-alpha either to a competitive inhibitor of translation initiation, leading to a global protein synthesis repression, and thus to a reduced overall utilization of amino acids, or to a translational initiation activation of specific mRNAs, and hence allowing reprogramming of amino acid biosynthetic gene expression to alleviate nutrient depletion. Binds uncharged tRNAs. The polypeptide is eIF-2-alpha kinase GCN2 (Arabidopsis thaliana (Mouse-ear cress)).